The chain runs to 647 residues: Threonine--tRNA ligase (647 aa).

Residues M1–T61 form the TGS domain. Residues D240–P538 form a catalytic region. Residues C334, H385, and H515 each contribute to the Zn(2+) site.

The protein belongs to the class-II aminoacyl-tRNA synthetase family. In terms of assembly, homodimer. The cofactor is Zn(2+).

It localises to the cytoplasm. The enzyme catalyses tRNA(Thr) + L-threonine + ATP = L-threonyl-tRNA(Thr) + AMP + diphosphate + H(+). Catalyzes the attachment of threonine to tRNA(Thr) in a two-step reaction: L-threonine is first activated by ATP to form Thr-AMP and then transferred to the acceptor end of tRNA(Thr). Also edits incorrectly charged L-seryl-tRNA(Thr). The protein is Threonine--tRNA ligase of Streptococcus pyogenes serotype M2 (strain MGAS10270).